A 303-amino-acid chain; its full sequence is Probable 5-dehydro-4-deoxyglucarate dehydratase (303 aa).

It belongs to the DapA family.

It catalyses the reaction 5-dehydro-4-deoxy-D-glucarate + H(+) = 2,5-dioxopentanoate + CO2 + H2O. Its pathway is carbohydrate acid metabolism; D-glucarate degradation; 2,5-dioxopentanoate from D-glucarate: step 2/2. This is Probable 5-dehydro-4-deoxyglucarate dehydratase from Pseudomonas syringae pv. tomato (strain ATCC BAA-871 / DC3000).